Here is a 274-residue protein sequence, read N- to C-terminus: Kit ligand (274 aa).

The signal sequence occupies residues 1–25 (MKKTQTWIITCIYLQLLLFNPLVKT). The Extracellular segment spans residues 26-215 (KGICGKRVTD…SNSIGDSNLQ (190 aa)). Disulfide bonds link Cys29–Cys114 and Cys68–Cys164. Residues Asn90, Asn97, Asn145, and Asn196 are each glycosylated (N-linked (GlcNAc...) asparagine). The helical transmembrane segment at 216 to 238 (WAAMALPAFFSLVIGFAFGALYW) threads the bilayer. The Cytoplasmic portion of the chain corresponds to 239 to 274 (KKKQPNLTRTVENIQINEEDNEISMLQEKEREFQEV).

The protein belongs to the SCF family. Homodimer, non-covalently linked. A soluble form is produced by proteolytic processing of the extracellular domain.

Its subcellular location is the cytoplasm. The protein resides in the cytoskeleton. The protein localises to the cell membrane. It localises to the cell projection. It is found in the lamellipodium. Its subcellular location is the filopodium. The protein resides in the secreted. Stimulates the proliferation of mast cells. Able to augment the proliferation of both myeloid and lymphoid hematopoietic progenitors in bone marrow culture. Also mediates cell-cell adhesion. Acts synergistically with other cytokines, probably interleukins. The protein is Kit ligand (KITLG) of Canis lupus familiaris (Dog).